The primary structure comprises 302 residues: tRNA pseudouridine synthase B (302 aa).

Asp-45 acts as the Nucleophile in catalysis.

This sequence belongs to the pseudouridine synthase TruB family. Type 1 subfamily.

The catalysed reaction is uridine(55) in tRNA = pseudouridine(55) in tRNA. Functionally, responsible for synthesis of pseudouridine from uracil-55 in the psi GC loop of transfer RNAs. In Francisella tularensis subsp. tularensis (strain FSC 198), this protein is tRNA pseudouridine synthase B.